The chain runs to 191 residues: Elongation factor P (191 aa).

This sequence belongs to the elongation factor P family.

It localises to the cytoplasm. The protein operates within protein biosynthesis; polypeptide chain elongation. Its function is as follows. Involved in peptide bond synthesis. Stimulates efficient translation and peptide-bond synthesis on native or reconstituted 70S ribosomes in vitro. Probably functions indirectly by altering the affinity of the ribosome for aminoacyl-tRNA, thus increasing their reactivity as acceptors for peptidyl transferase. This is Elongation factor P from Bartonella henselae (strain ATCC 49882 / DSM 28221 / CCUG 30454 / Houston 1) (Rochalimaea henselae).